Consider the following 322-residue polypeptide: tRNA U34 carboxymethyltransferase (322 aa).

Carboxy-S-adenosyl-L-methionine is bound by residues Lys90, Trp104, Lys109, Gly129, 151-153, 180-181, Met195, Tyr199, and Arg314; these read DPT and IE.

It belongs to the class I-like SAM-binding methyltransferase superfamily. CmoB family. Homotetramer.

The catalysed reaction is carboxy-S-adenosyl-L-methionine + 5-hydroxyuridine(34) in tRNA = 5-carboxymethoxyuridine(34) in tRNA + S-adenosyl-L-homocysteine + H(+). In terms of biological role, catalyzes carboxymethyl transfer from carboxy-S-adenosyl-L-methionine (Cx-SAM) to 5-hydroxyuridine (ho5U) to form 5-carboxymethoxyuridine (cmo5U) at position 34 in tRNAs. This chain is tRNA U34 carboxymethyltransferase, found in Citrobacter koseri (strain ATCC BAA-895 / CDC 4225-83 / SGSC4696).